A 347-amino-acid chain; its full sequence is 4-hydroxy-2-oxovalerate aldolase (347 aa).

The Pyruvate carboxyltransferase domain occupies 2-252 (ILISDATLRD…DTRTTFERVM (251 aa)). 10-11 (RD) contributes to the substrate binding site. Residue aspartate 11 coordinates Mn(2+). The Proton acceptor role is filled by histidine 14. Positions 164 and 191 each coordinate substrate. Mn(2+) contacts are provided by histidine 191 and histidine 193.

Belongs to the 4-hydroxy-2-oxovalerate aldolase family.

The enzyme catalyses (S)-4-hydroxy-2-oxopentanoate = acetaldehyde + pyruvate. The polypeptide is 4-hydroxy-2-oxovalerate aldolase (Burkholderia pseudomallei (strain 1106a)).